The chain runs to 499 residues: Maturase K (499 aa).

Belongs to the intron maturase 2 family. MatK subfamily.

It is found in the plastid. It localises to the chloroplast. Its function is as follows. Usually encoded in the trnK tRNA gene intron. Probably assists in splicing its own and other chloroplast group II introns. This Ceratonia siliqua (Carob) protein is Maturase K.